The sequence spans 307 residues: 2-dehydropantoate 2-reductase (307 aa).

NADP(+) is bound by residues 7-12 (GSGAMG), asparagine 102, and alanine 128. Position 102 (asparagine 102) interacts with substrate. Lysine 184 serves as the catalytic Proton donor. Residues asparagine 188, asparagine 192, and serine 255 each coordinate substrate. Residue glutamate 268 participates in NADP(+) binding.

The protein belongs to the ketopantoate reductase family.

The protein resides in the cytoplasm. It catalyses the reaction (R)-pantoate + NADP(+) = 2-dehydropantoate + NADPH + H(+). The protein operates within cofactor biosynthesis; (R)-pantothenate biosynthesis; (R)-pantoate from 3-methyl-2-oxobutanoate: step 2/2. Its function is as follows. Catalyzes the NADPH-dependent reduction of ketopantoate into pantoic acid. The protein is 2-dehydropantoate 2-reductase (apbA) of Streptococcus pyogenes serotype M18 (strain MGAS8232).